Reading from the N-terminus, the 223-residue chain is Flagellar L-ring protein (223 aa).

A signal peptide spans 1-18 (MKKSLMALIVVGSFLLSA). A lipid anchor (N-palmitoyl cysteine) is attached at Cys19. Cys19 is lipidated: S-diacylglycerol cysteine.

This sequence belongs to the FlgH family. As to quaternary structure, the basal body constitutes a major portion of the flagellar organelle and consists of four rings (L,P,S, and M) mounted on a central rod.

Its subcellular location is the cell outer membrane. The protein localises to the bacterial flagellum basal body. Assembles around the rod to form the L-ring and probably protects the motor/basal body from shearing forces during rotation. In Herminiimonas arsenicoxydans, this protein is Flagellar L-ring protein.